Consider the following 262-residue polypeptide: Phosphatidylserine decarboxylase proenzyme (262 aa).

Residues D86, H142, and S226 each act as charge relay system; for autoendoproteolytic cleavage activity in the active site. The Schiff-base intermediate with substrate; via pyruvic acid; for decarboxylase activity role is filled by S226. S226 bears the Pyruvic acid (Ser); by autocatalysis mark.

Belongs to the phosphatidylserine decarboxylase family. PSD-B subfamily. Prokaryotic type I sub-subfamily. In terms of assembly, heterodimer of a large membrane-associated beta subunit and a small pyruvoyl-containing alpha subunit. Requires pyruvate as cofactor. Post-translationally, is synthesized initially as an inactive proenzyme. Formation of the active enzyme involves a self-maturation process in which the active site pyruvoyl group is generated from an internal serine residue via an autocatalytic post-translational modification. Two non-identical subunits are generated from the proenzyme in this reaction, and the pyruvate is formed at the N-terminus of the alpha chain, which is derived from the carboxyl end of the proenzyme. The autoendoproteolytic cleavage occurs by a canonical serine protease mechanism, in which the side chain hydroxyl group of the serine supplies its oxygen atom to form the C-terminus of the beta chain, while the remainder of the serine residue undergoes an oxidative deamination to produce ammonia and the pyruvoyl prosthetic group on the alpha chain. During this reaction, the Ser that is part of the protease active site of the proenzyme becomes the pyruvoyl prosthetic group, which constitutes an essential element of the active site of the mature decarboxylase.

It localises to the cell membrane. It catalyses the reaction a 1,2-diacyl-sn-glycero-3-phospho-L-serine + H(+) = a 1,2-diacyl-sn-glycero-3-phosphoethanolamine + CO2. It functions in the pathway phospholipid metabolism; phosphatidylethanolamine biosynthesis; phosphatidylethanolamine from CDP-diacylglycerol: step 2/2. Its function is as follows. Catalyzes the formation of phosphatidylethanolamine (PtdEtn) from phosphatidylserine (PtdSer). The polypeptide is Phosphatidylserine decarboxylase proenzyme (Bacillus thuringiensis subsp. konkukian (strain 97-27)).